A 435-amino-acid chain; its full sequence is 5-methylthioadenosine/S-adenosylhomocysteine deaminase (435 aa).

H65 and H67 together coordinate Zn(2+). Substrate-binding residues include E94, R150, and H189. Zn(2+) is bound at residue H216. Substrate is bound by residues E219 and D304. Position 304 (D304) interacts with Zn(2+).

It belongs to the metallo-dependent hydrolases superfamily. MTA/SAH deaminase family. Zn(2+) is required as a cofactor.

The enzyme catalyses S-adenosyl-L-homocysteine + H2O + H(+) = S-inosyl-L-homocysteine + NH4(+). The catalysed reaction is S-methyl-5'-thioadenosine + H2O + H(+) = S-methyl-5'-thioinosine + NH4(+). Its function is as follows. Catalyzes the deamination of 5-methylthioadenosine and S-adenosyl-L-homocysteine into 5-methylthioinosine and S-inosyl-L-homocysteine, respectively. Is also able to deaminate adenosine. The protein is 5-methylthioadenosine/S-adenosylhomocysteine deaminase of Bacillus anthracis (strain A0248).